A 323-amino-acid polypeptide reads, in one-letter code: Sphingolipid delta(4)-desaturase DES1 (323 aa).

2 helical membrane passes run 41-61 (YNLI…FYLV) and 68-88 (WVVF…TLAI). Positions 89–93 (HEISH) match the Histidine box-1 motif. Residues 102–122 (AMWNRWFGIFANLPLGLPYSI) form a helical membrane-spanning segment. Residues 128 to 132 (HMDHH) carry the Histidine box-2 motif. 3 helical membrane passes run 159–179 (KFIW…CINP), 185–205 (LEII…YLWG), and 209–229 (IFYM…SGHF). Positions 259-263 (HNEHH) match the Histidine box-3 motif.

Belongs to the fatty acid desaturase type 1 family. DEGS subfamily. Interacts with RLBP1; the interaction increases synthesis of chromophore-precursors by DEGS1. As to expression, expressed in retina and retinal pigment epithelium by Mueller cells (at protein level).

Its subcellular location is the endoplasmic reticulum membrane. The enzyme catalyses an N-acylsphinganine + 2 Fe(II)-[cytochrome b5] + O2 + 2 H(+) = an N-acylsphing-4-enine + 2 Fe(III)-[cytochrome b5] + 2 H2O. The catalysed reaction is all-trans-retinol = 11-cis-retinol. It carries out the reaction all-trans-retinol = 9-cis-retinol. It catalyses the reaction all-trans-retinol = 13-cis-retinol. The enzyme catalyses 11-cis-retinol = 13-cis-retinol. The catalysed reaction is 11-cis-retinol = 9-cis-retinol. Functionally, has sphingolipid-delta-4-desaturase activity. Converts D-erythro-sphinganine to D-erythro-sphingosine (E-sphing-4-enine). Catalyzes the equilibrium isomerization of retinols. In Gallus gallus (Chicken), this protein is Sphingolipid delta(4)-desaturase DES1 (DEGS1).